The primary structure comprises 876 residues: MASESGAEKGPPTTPAENGQPGVPIAAAVAADEQGMISVDIAGLFYQFSKTFILIFPVYVLGYFGLSFSWLLIALVLLLWWRRNKGNKNSRLYRALAFLETEEKSVKHHIASIDLPAWVHFPDIERAEWLNKTVKHMWPYICQFIEKLFRETIEPAVRGANAHLSTFSFTKIDMGSQPLRINGVKVYTENVDKRQIILDLQISFVGETEIDLEVKRYFCRAGVKSIQLHGTMRVILEPLIGDVPIVGALSIFFLRKPLLEINWTGLTNMLDMPGLNGLSDTIILDIISNYLVLPNRITVPLVSDVQIAQLRFPIPKGVLRIHFLEAQDLMWKDTYMKGLVKGKSDPYGVVRLGNQVFQSKVIKENLNPKWNEVYEALVHEHPGQELEIELFDEDTDKDDFLGSLLIDLVEVEKERVVDEWFTLDEATSGKLHLKLEWLTPKSTTENLDQVLKSIKADKDQANDGLSAALLILYLDSARSLPNNPLEINHDGMKKAAVEKAKKAGKKIGSSPNPYVLFSVGHTVQESKVKYKTAEPVWEQTFTFFVHNPKRQDLEVEVKDENHQNSMGNIKIPLSQILASEDLTLNQRFHLNNSGPNSSLKMKIALRILHVEKPVRSPDEQHTSQVKRPSIFKGKQPPTPQMPAPSPAVAHKPPPTPKLETNKKLENGNKSSTPSASPKRPTELHKSSSSLSGSSFTYSPPHLPTKEPTPSIASDISLPVATQELRERLRQLQNGTTLGQSPLGQIQLTIRHSSQRNKLMVVVHSCRNLIAFSEEGSDPYVRIYLLPDKRRSGRRKTHVHKRTLNPIYDQTFEFSVSLADLQRRTLDVAVKNGGGFLFREKGLLGKLLLEINTEDAAKGWTQWFDLTEDGTRAAASS.

The disordered stretch occupies residues methionine 1–proline 21. The Cytoplasmic portion of the chain corresponds to methionine 1 to glycine 35. A helical transmembrane segment spans residues methionine 36–phenylalanine 56. Over proline 57–tyrosine 59 the chain is Lumenal. Residues valine 60–tryptophan 80 form a helical membrane-spanning segment. The Cytoplasmic segment spans residues tryptophan 81–serine 876. The SMP-LTD domain maps to aspartate 123–valine 302. C2 domains lie at leucine 301–phenylalanine 421 and asparagine 446–asparagine 592. Positions 332, 333, 345, 392, 393, 394, 396, 398, and 399 each coordinate Ca(2+). Residues valine 614 to aspartate 714 form a disordered region. Positions proline 636–proline 656 are enriched in pro residues. Low complexity predominate over residues serine 686–serine 698. Positions proline 741–phenylalanine 863 constitute a C2 3 domain. Positions lysine 788–lysine 795 are required for phosphatidylinositol 4,5-bisphosphate-dependent location at the cell membrane.

It belongs to the extended synaptotagmin family. Interacts with fgfr1 that has been activated by fgf1 binding. Interacts (via C2 domains) with the AP-2 complex (via an alpha subunit). Identified in a complex with the AP-2 complex and fgfr1.

It localises to the cell membrane. It is found in the endoplasmic reticulum membrane. Its function is as follows. Tethers the endoplasmic reticulum to the cell membrane and promotes the formation of appositions between the endoplasmic reticulum and the cell membrane. Binds glycerophospholipids in a barrel-like domain and may play a role in cellular lipid transport. Plays a role in the rapid internalization of fgfr1 that has been activated by fgf1 binding; this occurs most likely via the AP-2 complex. Required for normal fgf signaling and the activation of downstream signaling cascades via its role in the internalization of activated fgfr1. Required for normal embryonic development via its role in fgf signaling and the downstream regulation of t/xBRA expression. The chain is Extended synaptotagmin-2-B (esyt2-b) from Xenopus laevis (African clawed frog).